We begin with the raw amino-acid sequence, 174 residues long: NADH-ubiquinone oxidoreductase chain 6 (174 aa).

5 consecutive transmembrane segments (helical) span residues 1 to 21, 24 to 44, 47 to 67, 86 to 106, and 151 to 171; these read MTYV…GFSS, SPIY…MIIL, GGAY…MVVF, FEVL…VLWV, and WLVV…IEIT.

It belongs to the complex I subunit 6 family. As to quaternary structure, core subunit of respiratory chain NADH dehydrogenase (Complex I) which is composed of 45 different subunits.

The protein resides in the mitochondrion inner membrane. The enzyme catalyses a ubiquinone + NADH + 5 H(+)(in) = a ubiquinol + NAD(+) + 4 H(+)(out). Core subunit of the mitochondrial membrane respiratory chain NADH dehydrogenase (Complex I) which catalyzes electron transfer from NADH through the respiratory chain, using ubiquinone as an electron acceptor. Essential for the catalytic activity and assembly of complex I. This Papio hamadryas (Hamadryas baboon) protein is NADH-ubiquinone oxidoreductase chain 6 (MT-ND6).